A 164-amino-acid chain; its full sequence is Protein-export protein SecB (164 aa).

This sequence belongs to the SecB family. In terms of assembly, homotetramer, a dimer of dimers. One homotetramer interacts with 1 SecA dimer.

It localises to the cytoplasm. Its function is as follows. One of the proteins required for the normal export of preproteins out of the cell cytoplasm. It is a molecular chaperone that binds to a subset of precursor proteins, maintaining them in a translocation-competent state. It also specifically binds to its receptor SecA. In Chromohalobacter salexigens (strain ATCC BAA-138 / DSM 3043 / CIP 106854 / NCIMB 13768 / 1H11), this protein is Protein-export protein SecB.